The sequence spans 387 residues: Peroxisomal membrane protein LPX1 (387 aa).

The tract at residues 385-387 (QKL) is peroxisomal targeting signal type 1.

It is found in the peroxisome matrix. In terms of biological role, has acyl esterase, lipase and phospholipase A activity. The protein is Peroxisomal membrane protein LPX1 (LPX1) of Saccharomyces cerevisiae (strain ATCC 204508 / S288c) (Baker's yeast).